Here is a 1040-residue protein sequence, read N- to C-terminus: Multidrug resistance protein MdtB (1040 aa).

The next 12 helical transmembrane spans lie at 16–36 (FIMR…AGII), 347–367 (LMMA…NIPA), 369–389 (IIPG…MVFL), 396–416 (LTLM…IVVI), 440–460 (IGFT…PLLF), 472–492 (FAIT…TLTP), 537–557 (WLTL…WVFI), 863–883 (LGST…VLGI), 888–908 (FIHP…ALLA), 911–931 (IAGS…IGIV), 968–988 (ILMT…STGV), and 998–1018 (IGMV…TPVI).

The protein belongs to the resistance-nodulation-cell division (RND) (TC 2.A.6) family. MdtB subfamily. In terms of assembly, part of a tripartite efflux system composed of MdtA, MdtB and MdtC. MdtB forms a heteromultimer with MdtC.

It is found in the cell inner membrane. The MdtABC tripartite complex confers resistance against novobiocin and deoxycholate. The polypeptide is Multidrug resistance protein MdtB (Escherichia coli (strain K12 / MC4100 / BW2952)).